The chain runs to 1077 residues: Teashirt homolog 1 (1077 aa).

Disordered regions lie at residues 1–109 (MPRR…VSYP), 139–195 (SGST…SSSS), and 269–298 (GHYR…MEME). Residues 26-36 (IDEEHVEDDGL) are compositionally biased toward acidic residues. Polar residues-rich tracts occupy residues 57–71 (QSYQ…TNQD) and 139–152 (SGST…SQKE). Low complexity predominate over residues 164 to 195 (PVSTTGPTTSTPSTSCSSSTSHSSTTSTSSSS). 2 consecutive C2H2-type zinc fingers follow at residues 246 to 270 (FRCK…ETGH) and 307 to 331 (LKCM…KTKH). Over residues 269–284 (GHYRDDNRDKDSEKTK) the composition is skewed to basic and acidic residues. A C2H2-type 3; atypical zinc finger spans residues 416 to 440 (LKCMECGSSHDTLQQLTAHMMVTGH). Disordered stretches follow at residues 467–549 (SIPL…KGGL) and 647–720 (TGKV…EPLK). Basic and acidic residues-rich tracts occupy residues 496 to 528 (SEEK…EKFE), 647 to 665 (TGKV…EKSS), and 675 to 708 (KENK…EGPL). Ser-765 bears the Phosphoserine mark. Positions 848–873 (TGRLTPKSSTPSTVSEKSDADGSSFE) are disordered. Polar residues predominate over residues 853 to 862 (PKSSTPSTVS). Positions 885–955 (RKGRQSNWNP…NVKYQLRRTG (71 aa)) form a DNA-binding region, homeobox; atypical. 2 C2H2-type zinc fingers span residues 970 to 992 (FFCN…LETH) and 1037 to 1060 (FQCK…SKTH).

Belongs to the teashirt C2H2-type zinc-finger protein family. In terms of assembly, interacts (via homeobox domain) with APBB1 (via PID domain 1). Expressed in brain; strongly reduced in post-mortem elderly subjects with Alzheimer disease.

Its subcellular location is the nucleus. Functionally, probable transcriptional regulator involved in developmental processes. May act as a transcriptional repressor (Potential). The sequence is that of Teashirt homolog 1 (TSHZ1) from Homo sapiens (Human).